The following is a 379-amino-acid chain: MKVTICGAGRTGHLNAVLFKQNPGIDVSVLTTSATVAARWASGDGLWQAVTRDGRTLSARPDYIGTDPSAALDNADMVLITQPAQARSALLHRIAPYLPTDKSVYIGAIPGFCGFDWLAAKVLSGRDNVVIWGMKDVPHIAYDLIAGQRVRMGGAKAELFVALHRRESAASAAALMAMLNHIYEAPVNLLKDYLEITLTPGNALMHPAVLYALIGPGAPWEKRPFDEALCWWSDCPQAGAELLEACDAENQAIRRASEARLGIDLSSVKPLQQELIEAYGDQIGDDRTMYTLLRTNRAYAGIPAPLVPNPHGPGLVIDRGSRAFHEDIAFGQALLVTMAERLEATVPAIAKIYRWACDYHGKLAAGTPDYVPADWPEAA.

This is an uncharacterized protein from Sinorhizobium fredii (strain NBRC 101917 / NGR234).